The primary structure comprises 155 residues: Small ribosomal subunit protein uS7c (155 aa).

The protein belongs to the universal ribosomal protein uS7 family. Part of the 30S ribosomal subunit.

Its subcellular location is the plastid. It is found in the chloroplast. In terms of biological role, one of the primary rRNA binding proteins, it binds directly to 16S rRNA where it nucleates assembly of the head domain of the 30S subunit. This is Small ribosomal subunit protein uS7c (rps7) from Lilium superbum (Turk's cap lily).